Reading from the N-terminus, the 179-residue chain is Large ribosomal subunit protein uL6 (179 aa).

This sequence belongs to the universal ribosomal protein uL6 family. Part of the 50S ribosomal subunit.

In terms of biological role, this protein binds to the 23S rRNA, and is important in its secondary structure. It is located near the subunit interface in the base of the L7/L12 stalk, and near the tRNA binding site of the peptidyltransferase center. This Chlorobium phaeobacteroides (strain DSM 266 / SMG 266 / 2430) protein is Large ribosomal subunit protein uL6.